The sequence spans 136 residues: Small ribosomal subunit protein uS8c (136 aa).

This sequence belongs to the universal ribosomal protein uS8 family. As to quaternary structure, part of the 30S ribosomal subunit.

It localises to the plastid. The protein resides in the chloroplast. Its function is as follows. One of the primary rRNA binding proteins, it binds directly to 16S rRNA central domain where it helps coordinate assembly of the platform of the 30S subunit. In Oryza sativa subsp. indica (Rice), this protein is Small ribosomal subunit protein uS8c (rps8).